Consider the following 609-residue polypeptide: mRNA cap guanine-N(7) methyltransferase (609 aa).

The segment covering 1–10 (MASKEEERTG) has biased composition (basic and acidic residues). The segment at 1–252 (MASKEEERTG…EEDAMRNSQS (252 aa)) is disordered. 2 stretches are compositionally biased toward low complexity: residues 28 to 47 (QPVV…ATPT) and 70 to 87 (PQTT…QQKQ). A compositionally biased stretch (basic and acidic residues) spans 148–163 (ANDRPISKRKRLEERH). Pro residues predominate over residues 193–205 (PRSPSPPLPPRSP). The segment covering 233–247 (RRQEERERALEEDAM) has biased composition (basic and acidic residues). An mRNA cap 0 methyltransferase domain is found at 278 to 590 (SKIKGLRSFN…KYTPLGFTSA (313 aa)). Residue 287-288 (NN) coordinates mRNA. S-adenosyl-L-methionine contacts are provided by residues lysine 291, glycine 314, aspartate 338, aspartate 379, 422–424 (MFA), and tyrosine 427.

Belongs to the class I-like SAM-binding methyltransferase superfamily. mRNA cap 0 methyltransferase family.

The protein localises to the nucleus. It carries out the reaction a 5'-end (5'-triphosphoguanosine)-ribonucleoside in mRNA + S-adenosyl-L-methionine = a 5'-end (N(7)-methyl 5'-triphosphoguanosine)-ribonucleoside in mRNA + S-adenosyl-L-homocysteine. Responsible for methylating the 5'-cap structure of mRNAs. In Aspergillus niger (strain ATCC MYA-4892 / CBS 513.88 / FGSC A1513), this protein is mRNA cap guanine-N(7) methyltransferase (abd1).